Consider the following 434-residue polypeptide: Glutamate-1-semialdehyde 2,1-aminomutase 1 (434 aa).

Lys270 carries the post-translational modification N6-(pyridoxal phosphate)lysine.

It belongs to the class-III pyridoxal-phosphate-dependent aminotransferase family. HemL subfamily. As to quaternary structure, homodimer. The cofactor is pyridoxal 5'-phosphate.

Its subcellular location is the cytoplasm. The catalysed reaction is (S)-4-amino-5-oxopentanoate = 5-aminolevulinate. The protein operates within porphyrin-containing compound metabolism; protoporphyrin-IX biosynthesis; 5-aminolevulinate from L-glutamyl-tRNA(Glu): step 2/2. This chain is Glutamate-1-semialdehyde 2,1-aminomutase 1, found in Bacillus cereus (strain ATCC 10987 / NRS 248).